A 1176-amino-acid chain; its full sequence is Leucine--tRNA ligase, cytoplasmic (1176 aa).

2 residues coordinate L-leucine: Tyr52 and Tyr54. Positions 60–63 (HLGH) match the 'HIGH' region motif. Positions 115–142 (PDFPDEEDEEEETNVKTEDTRIKDKAKG) are disordered. Residues 117-126 (FPDEEDEEEE) are compositionally biased toward acidic residues. Residues 127-139 (TNVKTEDTRIKDK) show a composition bias toward basic and acidic residues. Ser167 is modified (phosphoserine). The tract at residues 260 to 509 (GPQEYTLLKL…DAGDALIYME (250 aa)) is editing domain. 2 residues coordinate L-leucine: Leu594 and Ser597. The short motif at 716–720 (KMSKS) is the 'KMSKS' region element. Lys719 contributes to the ATP binding site. At Ser720 the chain carries Phosphoserine. Lys970 and Lys1047 each carry N6-acetyllysine.

The protein belongs to the class-I aminoacyl-tRNA synthetase family.

Its subcellular location is the cytoplasm. The catalysed reaction is tRNA(Leu) + L-leucine + ATP = L-leucyl-tRNA(Leu) + AMP + diphosphate. The enzyme catalyses L-methionyl-tRNA(Leu) + H2O = tRNA(Leu) + L-methionine + H(+). 5-fluoro-1,3-dihydro-1-hydroxy-1,2-benzoxaborole inhibits LARS1 by forming a covalent adduct with the 3' adenosine of tRNA(Leu) at the editing site, thus locking the enzyme in an inactive conformation. Its function is as follows. Aminoacyl-tRNA synthetase that catalyzes the specific attachment of leucine to its cognate tRNA (tRNA(Leu)). It performs tRNA aminoacylation in a two-step reaction: Leu is initially activated by ATP to form a leucyl-adenylate (Leu-AMP) intermediate; then the leucyl moiety is transferred to the acceptor 3' end of the tRNA to yield leucyl-tRNA. To improve the fidelity of catalytic reactions, it is also able to hydrolyze misactivated aminoacyl-adenylate intermediates (pre-transfer editing) and mischarged aminoacyl-tRNAs (post-transfer editing). The protein is Leucine--tRNA ligase, cytoplasmic (LARS1) of Pongo abelii (Sumatran orangutan).